The primary structure comprises 438 residues: MAVSEIKPKLKLNPLTKVPISHNKRDRDLPGSLQCQLQHKEKKLSASQMAAFQDAYNFFYKDKTGCIDFHGLMCTVAKLGMNLTKHDVYNELKCADIDRDGKVNFSDFIKVLTDKNLFLKAVVPEKETCLDLAGNPGILLFEILSRLLETSALPRKSIIEIVSYFQRKFQHTGPGMLWSPYTMGYGKRTLKPDICTPPSSSMAAFANAARIAIMKEKDLFKFLEELKRCNSGSDSPYSKIPIFPLFPNVDGVVMGKPFKDMQKLEMLRIKEPLHFFEDYFFHKRDWKTQAANIKSMDPASGYSNNIFTIDQMLKKKQTCTVADATAIKQHVKRATDTYNLGIALEHRKEMLNLWQKIRGDLIGMDSRNESFYDTFSTYTWSWNVCQELLSPKDLRLYDAYVNRNSSHNSRSSSSSDTSECYTDSGRKRKRKGLKGFQQ.

EF-hand domains lie at 47–82 (SQMAAFQDAYNFFYKDKTGCIDFHGLMCTVAKLGMN) and 83–118 (LTKHDVYNELKCADIDRDGKVNFSDFIKVLTDKNLF). Ca(2+) is bound by residues Asp96, Asp98, Asp100, Lys102, and Asp107. Position 279 is a phosphotyrosine (Tyr279). Positions 405-415 (SSHNSRSSSSS) are enriched in low complexity. The segment at 405 to 438 (SSHNSRSSSSSDTSECYTDSGRKRKRKGLKGFQQ) is disordered. Residues 426–438 (RKRKRKGLKGFQQ) are compositionally biased toward basic residues.

The chain is EF-hand calcium-binding domain-containing protein 3 (EFCAB3) from Homo sapiens (Human).